The primary structure comprises 364 residues: DNA replication and repair protein RecF (364 aa).

Residue Gly-30–Thr-37 participates in ATP binding.

This sequence belongs to the RecF family.

The protein resides in the cytoplasm. Functionally, the RecF protein is involved in DNA metabolism; it is required for DNA replication and normal SOS inducibility. RecF binds preferentially to single-stranded, linear DNA. It also seems to bind ATP. The polypeptide is DNA replication and repair protein RecF (Stenotrophomonas maltophilia (strain R551-3)).